Reading from the N-terminus, the 167-residue chain is CASP-like protein 3 (167 aa).

Residues 1–2 lie on the Cytoplasmic side of the membrane; sequence MK. A helical membrane pass occupies residues 3–23; it reads IIAIAPRIGAAVLSLVAFSVM. The Extracellular portion of the chain corresponds to 24–48; that stretch reads ASTGERRSGAGSTFKVKFSDFQAYN. A helical transmembrane segment spans residues 49–69; that stretch reads YLIALNVILFVYSTVQLVMLV. Residues 70 to 80 are Cytoplasmic-facing; sequence NSNHNSSFSSP. The helical transmembrane segment at 81-101 threads the bilayer; sequence FKWVLGVYICDQLLAFLLFSA. Residues 102 to 137 lie on the Extracellular side of the membrane; the sequence is SSSAATASELSRHGLHNIWPPACATWKLWTFCSKAE. Residues 138–158 form a helical membrane-spanning segment; that stretch reads AAVAMSFLSSFFIITSSILSG. The Cytoplasmic portion of the chain corresponds to 159–167; that stretch reads YHLSKVPAV.

Belongs to the Casparian strip membrane proteins (CASP) family. In terms of assembly, homodimer and heterodimers.

It localises to the cell membrane. This chain is CASP-like protein 3, found in Osmunda lancea (Fern).